The primary structure comprises 402 residues: MQEIEQRIYLAATYDTKGEEAEYLRQLLRRDGVMVVTVDVATSGQGSPAMVSAQEVAACHPQGAQAVFTGERGSAIVAMALAFERYLAGQRDVGAVLGIGGSGGTALVTPAMRALPVGVPKLMVSTMASGNVAPYVGPSDIAMMYSVTDVAGLNRISRRVLANAAGAIAGAFRQARQPIADDGRPAVGITMFGVTTPCVQHVTAALHDRYDCLVFHATGTGGQSMEKLADSRLLAGVLDLTTTEVCDFLFGGVLACTDDRFGAIARSGVPYVGSCGALDMVNFGALDTVPAACRERLLYPHNPQVTLMRTTAQENARQGAWIAERLNRCEGQVRFLIPEGGVSALDAPGQAFHDEAADAALFQALYDHVRQTDKRRLVRVPCHINDPLFARAAVEQFHEISQ.

Belongs to the UPF0261 family.

The polypeptide is UPF0261 protein BP1203 (Bordetella pertussis (strain Tohama I / ATCC BAA-589 / NCTC 13251)).